Here is a 1942-residue protein sequence, read N- to C-terminus: Probable helicase with zinc finger domain (1942 aa).

The segment at 178 to 206 (SEEYTLCKRFLEQGICRYGAQCTSAHSQE) adopts a C3H1-type zinc-finger fold. Serine 248 bears the Phosphoserine mark. Position 668–675 (668–675 (GPYGTGKT)) interacts with ATP. The DEAA box signature appears at 794–797 (DEAA). Residues 1117–1127 (SGSTNKQQQSP) show a composition bias toward polar residues. A disordered region spans residues 1117–1141 (SGSTNKQQQSPPKGKSLHHTQNDHF). Residue threonine 1163 is modified to Phosphothreonine. The residue at position 1245 (arginine 1245) is an Omega-N-methylarginine. Disordered stretches follow at residues 1246–1345 (GSPI…INLP), 1386–1429 (NLPE…GPNN), 1527–1552 (QGSA…GLHQ), and 1608–1637 (RQVQ…FNDN). 2 stretches are compositionally biased toward basic and acidic residues: residues 1268–1281 (HQEK…RNGK) and 1292–1308 (NKIR…KQVD). Low complexity predominate over residues 1399-1412 (NQVVQQQSQLNQQP). Position 1614 is a phosphoserine (serine 1614). Positions 1623 to 1636 (SSTDHSSHFSNFND) are enriched in low complexity. Phosphoserine is present on residues serine 1645, serine 1738, serine 1741, and serine 1766. Disordered regions lie at residues 1729–1779 (FHPL…TPQD), 1792–1843 (NQSS…PEDQ), and 1870–1942 (MPNK…SYFK). Residues 1731–1745 (PLSSRTVSSSSLPSL) show a composition bias toward low complexity. Composition is skewed to polar residues over residues 1761–1779 (RISS…TPQD) and 1792–1825 (NQSS…SRTA). 2 stretches are compositionally biased toward low complexity: residues 1876–1888 (AESA…QSSA) and 1920–1942 (LSLF…SYFK).

The protein belongs to the DNA2/NAM7 helicase family. In terms of assembly, interacts with SMYD2. Interacts with POLR2A. Interacts with SMYD3; the interaction may bridge SMYD3 and RNA polymerase II. Expressed predominantly in thymus and brain. Expression is down-regulated in 28 of 95 tested cancer cell lines.

The protein localises to the nucleus. Its function is as follows. May act as a helicase that plays a role in RNA metabolism in multiple tissues and organs within the developing embryo. The chain is Probable helicase with zinc finger domain (HELZ) from Homo sapiens (Human).